The chain runs to 456 residues: ATP synthase subunit beta (456 aa).

135 to 142 is an ATP binding site; the sequence is GGAGVGKT.

Belongs to the ATPase alpha/beta chains family. F-type ATPases have 2 components, CF(1) - the catalytic core - and CF(0) - the membrane proton channel. CF(1) has five subunits: alpha(3), beta(3), gamma(1), delta(1), epsilon(1). CF(0) has four main subunits: a(1), b(1), b'(1) and c(9-12).

The protein resides in the cellular thylakoid membrane. It catalyses the reaction ATP + H2O + 4 H(+)(in) = ADP + phosphate + 5 H(+)(out). Functionally, produces ATP from ADP in the presence of a proton gradient across the membrane. The catalytic sites are hosted primarily by the beta subunits. The sequence is that of ATP synthase subunit beta (atpD) from Acaryochloris marina (strain MBIC 11017).